The sequence spans 214 residues: Methyltransferase HEMK2 (214 aa).

7 residues coordinate S-adenosyl-L-homocysteine: T29, E51, G53, D77, D103, L104, and N122. T29, E51, G53, D77, D103, L104, and N122 together coordinate S-adenosyl-L-methionine. N122 contacts a protein.

The protein belongs to the eukaryotic/archaeal PrmC-related family. In terms of assembly, heterodimer; heterodimerization with TRMT112 is required for S-adenosyl-L-methionine-binding. Does not interact with TRMT112. Post-translationally, ubiquitinated, leading to its degradation by the proteasome. In terms of tissue distribution, widely expressed, with highest expression in parathyroid and pituitary glands, followed by adrenal gland and kidney, and lowest expression in leukocytes and mammary gland.

It localises to the nucleus. It carries out the reaction L-lysyl-[histone] + S-adenosyl-L-methionine = N(6)-methyl-L-lysyl-[histone] + S-adenosyl-L-homocysteine + H(+). The enzyme catalyses L-glutaminyl-[protein] + S-adenosyl-L-methionine = N(5)-methyl-L-glutaminyl-[protein] + S-adenosyl-L-homocysteine + H(+). The catalysed reaction is methylarsonous acid + S-adenosyl-L-methionine = dimethylarsinate + S-adenosyl-L-homocysteine + 2 H(+). Its function is as follows. Methyltransferase that can methylate proteins and, to a lower extent, arsenic. Catalytic subunit of a heterodimer with TRMT112, which monomethylates 'Lys-12' of histone H4 (H4K12me1), a modification present at the promoters of numerous genes encoding cell cycle regulators. Catalytic subunit of a heterodimer with TRMT112, which catalyzes N5-methylation of Glu residue of proteins with a Gly-Gln-Xaa-Xaa-Xaa-Arg motif. Methylates ETF1 on 'Gln-185'; ETF1 needs to be complexed to ERF3 in its GTP-bound form to be efficiently methylated. May also play a role in the modulation of arsenic-induced toxicity by mediating the conversion of monomethylarsonous acid (3+) into the less toxic dimethylarsonic acid. It however only plays a limited role in arsenic metabolism compared with AS3MT. The chain is Methyltransferase HEMK2 from Homo sapiens (Human).